Reading from the N-terminus, the 418-residue chain is Actin-related protein 3 (418 aa).

An N-acetylmethionine modification is found at methionine 1.

It belongs to the actin family. ARP3 subfamily. As to quaternary structure, component of the Arp2/3 complex composed of arpB/Arp2, arpC/Arp3, arcA/p41-arc, arcB/p34-arc, arcC/p21-arc, arcD/p20-arc and arcE/p16-arc. Interacts with carmil (via the region between the LRR domain and COOH-terminal proline-rich domain); carmil is required for Arp2/3-dependent actin nucleation. Arp2/3 complex, MyoB, MyoC, and the alpha and beta subunits of capping protein all form a larger complex with carmil.

The protein localises to the cytoplasm. Its subcellular location is the cytoskeleton. It localises to the cytosol. It is found in the cell cortex. The protein resides in the cell projection. The protein localises to the pseudopodium. Functionally, functions as ATP-binding component of the Arp2/3 complex which is involved in regulation of actin polymerization and together with an activating nucleation-promoting factor (NPF) mediates the formation of branched actin networks. Seems to contact the pointed end of the daughter actin filament. The Arp2/3 complex is involved in organizing the actin system in cell motility and chemotaxis, in phagocytosis and macropinocytosis, at late steps of endosome processing, and in mitosis. In concert with a group of other proteins, the Arp2/3 complex plays a general role in the rapid activation and adaptation of the actin system to its multiple functions. This is Actin-related protein 3 (arpC) from Dictyostelium discoideum (Social amoeba).